We begin with the raw amino-acid sequence, 741 residues long: Protein O-mannosyl-transferase TMTC4 (741 aa).

Residues 1–14 (MAVLDTDLDHILPS) are Cytoplasmic-facing. A helical membrane pass occupies residues 15 to 35 (SVLPPFWAKLVVGSVAIVCFA). The Extracellular segment spans residues 36–111 (RSYDGDFVFD…FHPVGFHVVN (76 aa)). Asparagine 78 carries N-linked (GlcNAc...) asparagine glycosylation. The chain crosses the membrane as a helical span at residues 112-132 (ILLHSGISVLMVDVFSVLFGG). Over 133 to 141 (LQYTSKGRR) the chain is Cytoplasmic. The chain crosses the membrane as a helical span at residues 142 to 162 (LHLAPRASLLAALLFAVHPVH). The Extracellular segment spans residues 163 to 165 (TEC). Residues 166-186 (VAGVVGRADLLCALFFLLSFL) form a helical membrane-spanning segment. At 187–198 (GYCKAFRESNKE) the chain is on the cytoplasmic side. Residues 199 to 219 (GAHSSTFWVLLSIFLGAVAML) form a helical membrane-spanning segment. The Extracellular portion of the chain corresponds to 220–224 (CKEQG). A helical membrane pass occupies residues 225–245 (ITVLGLNAVFDILVIGKFNVL). The Cytoplasmic portion of the chain corresponds to 246–268 (EIVQKVLHKDKSLENLGMLRNGG). Residues 269-288 (LLFRMTLLTSGGAGMLYVRW) traverse the membrane as a helical segment. Topologically, residues 289 to 354 (RIMGTGPPAF…PLIKSISDWR (66 aa)) are extracellular. The helical transmembrane segment at 355 to 375 (VIALAALWFCLIGLICQALCS) threads the bilayer. The Cytoplasmic portion of the chain corresponds to 376–382 (EDGHKRR). A helical membrane pass occupies residues 383 to 403 (ILTLGLGFLVIPFLPASNLFF). Over 404–412 (RVGFVVAER) the chain is Extracellular. The chain crosses the membrane as a helical span at residues 413-433 (VLYLPSVGYCVLLTFGFGALS). The Cytoplasmic portion of the chain corresponds to 434-440 (KHTKKKK). A helical membrane pass occupies residues 441 to 461 (LIAAVVLGILFINTLRCVLRS). Topologically, residues 462-741 (GEWRSEEQLF…KLELMQKKAV (280 aa)) are extracellular. TPR repeat units follow at residues 482 to 515 (AKVHYNIGKNLADKGNQTAAIRYYREAVRLNPKY), 516 to 549 (VHAMNNLGNILKERNELQEAEELLSLAVQIQPDF), 550 to 583 (AAAWMNLGIVQNSLKRFEAAEQSYRTAIKHRRKY), 584 to 617 (PDCYYNLGRLYADLNRHVDALNAWRNATVLKPEH), 618 to 651 (SLAWNNMIILLDNTGNLAQAEAVGREALELIPND), 652 to 685 (HSLMFSLANVLGKSQKYKESEALFLKAIKANPNA), and 686 to 719 (ASYHGNLAVLYHRWGHLDLAKKHYEISLQLDPTA). An N-linked (GlcNAc...) asparagine glycan is attached at asparagine 497. A glycan (N-linked (GlcNAc...) asparagine) is linked at asparagine 609.

Belongs to the TMTC family.

The protein resides in the membrane. It is found in the endoplasmic reticulum. The enzyme catalyses a di-trans,poly-cis-dolichyl beta-D-mannosyl phosphate + L-seryl-[protein] = 3-O-(alpha-D-mannosyl)-L-seryl-[protein] + a di-trans,poly-cis-dolichyl phosphate + H(+). It carries out the reaction a di-trans,poly-cis-dolichyl beta-D-mannosyl phosphate + L-threonyl-[protein] = 3-O-(alpha-D-mannosyl)-L-threonyl-[protein] + a di-trans,poly-cis-dolichyl phosphate + H(+). Its pathway is protein modification; protein glycosylation. In terms of biological role, transfers mannosyl residues to the hydroxyl group of serine or threonine residues. The 4 members of the TMTC family are O-mannosyl-transferases dedicated primarily to the cadherin superfamily, each member seems to have a distinct role in decorating the cadherin domains with O-linked mannose glycans at specific regions. Also acts as O-mannosyl-transferase on other proteins such as PDIA3. The sequence is that of Protein O-mannosyl-transferase TMTC4 from Homo sapiens (Human).